The chain runs to 258 residues: Acetylglutamate kinase (258 aa).

Residues 44-45 (GG), Arg-66, and Asn-158 each bind substrate. ATP is bound by residues 181–186 (DVSGIL) and 209–211 (IIT).

Belongs to the acetylglutamate kinase family. ArgB subfamily. In terms of assembly, homodimer.

The protein resides in the cytoplasm. It catalyses the reaction N-acetyl-L-glutamate + ATP = N-acetyl-L-glutamyl 5-phosphate + ADP. The protein operates within amino-acid biosynthesis; L-arginine biosynthesis; N(2)-acetyl-L-ornithine from L-glutamate: step 2/4. In terms of biological role, catalyzes the ATP-dependent phosphorylation of N-acetyl-L-glutamate. This is Acetylglutamate kinase from Shigella dysenteriae serotype 1 (strain Sd197).